We begin with the raw amino-acid sequence, 2071 residues long: MPLKWAARNKKPPSAPQSCASKPSSASQSSCVDERISATPRSSISSNSSPNSKNNMSRHSHSNGSVYSDETTLKTAQTHYTQQGQQAKPQQHTQQQQQQPQTPMQLQVPTGQAHKRTLTCEDMKAGARCEEQVSPCSQPAGSPVRRGGGLNGETYDGTVFRLGWVNKAQGAAPAREGRYSHQPTASLSSIGSERPHFTGGGTSGYQYVATAYRLHRAQLKGCILNLYKSGLTNVKYFDPALEPSAAALQMHQERQEMPLLQPPLPSEAVPAPSILEASMESGELRLEYLSEAYPHPDLQLDKKDGKILSGSLESLCHAVLFMPTTDAKRVTDILLLLPLLDDFTRVLNYFNLFGKVFSKHHPAGAAGADDLNQNYNISNETDRQLTLRLATVVQTVLDMFPGFLLDDKIFQSLVILLDTISFHDEDTSQELKVAIAEKQTVLVKLTGFANEPIQSAKLDVLIKVQSFLKLDTEKVANQIHKINLTFNRVWSPQADYSLLYDSQYTQKHVELNPLVFFNDKNVQYLSRLMVSHIFCEETGFTPKKRAEVLTKWVQLGCKFERLGDMVSWLAIATVICSIPVLRLTRTWQYVPDSYLKIIFKDWVPTIVQLDRRQMSSKSMNSVFILAPPNLNDAFVRDNVIPYFGDLVIHSDDLPRDSKYKYLEKKIRRTKNAFYKWQQRLDQAFAQDRDSASSFTDSLHLDEEEHDVADFYQYWRFHMNLPPMNIETIMEMSLKMEPPSINQQTYSKTYSTRSALISGAYLPTLFTTLLPSYSLFPQELLIAAASTPSTKNNNSSQASNRISQLSVNSTPHSNASSSSAASAVTGIDNIDVPITKEISSKLSNKQVLLKFIRDMFNVDINVFHISDDVIFKSIRDYEAKSRPTSVVIESPKRLSLLSSVSPDVSAVSSALENLDLFKNFNSSSDDIAEFTVQVVLKCASLEKIFDILVLTSRVFSNLVTTTDLVSYFNSEKARREKSGAQHNGQHSIGLLDFALISLIMDNELFAETFFNNYKSFTTTLCVLENLAKRFIGAKSSAISISLINKLRNSESSRQIPPSTTSNQFSASGIFKPSYDELKFPVWDLKVTSVEGCPLDYLAKIQIGVLESLYHLIREHYADFTDDLANNKTFLDILKIINQEVYDEWDKRLDDLRNNNNSSQKRKNSCDDNSSAKITFHVNDARPENSNENKRGAATNLGDSSLAALEKLQCTLQDLYVKIKSSYQRQLYRPLGVTRNCRKVHDMLCQFQPQTSMSALIMNGSSDTLDKMVTEFQALKHTDYDDIINWIYKLDHFITSKLKLVSNQDWIQVSQILESLSNDSLVALFNYPLHAESNNVIASGSSQLDDLQILDIFTWLSTLESGSAHIIDKFPASVQLIVRLHLSLTKFFTVHIAHLHSTYEARVNTCSLILEILNFVHVKNANVNLFHSDDAGEGSMATISPHVPSFIETAIENAIISPESRFFEVSWKQAYKTISEKDEKLTFIGSVLTGLDKSTAHFLDADNRQPVRPKNFSPCPGWFISRLLEITGLVPNMSIENSKMINFDKRRFINNIVINYQDLIPNTEQLPSHDDEKSAHQFGSILFHYGTESSIKAFRKASKEAASNEARKLKFQAMGLFNDILVTEVYKVQRDQKKQEQLTVQEHEAKRSVLIQHPNKVSVSSASSSVSGSSSGSTARTSNPAHAAYALNMAGSLSISAARHGRSSVSSRSSVISNTATATSPASGASPNQTSTSHHGGMGKKIGGFLRRPFSISGFTSSSSQYTTTSVVLSGVQANGSISPYELPELTSEIQDTKIVTVIKTFEIKSCIQINNYRQDPDMMHCFKIVMEDGTQHTLQCMDDADMHEWMKAITLSKRYSFHSKRFKGKTSNKIFGVPVEDVCEREGALIPNIIVKLLDEIELRGLDEVGLYRVPGSVGSINALKNAFDDEGAVHNTFTLEDDRWFEINTIAGCFKLYLRELPESLFTNEKVDEFVNIMTAYKNHEVDLSQFQNGIKTLLSTLPVFNYHILKRLFLHLNRVHQHVENNRMDASNLAIVFSMSFINQDDLASTMGPTLGLLQMLLQHLIRNPEHYFT.

Disordered regions lie at residues 1–115 (MPLK…QAHK) and 171–195 (AAPA…SERP). 2 stretches are compositionally biased toward low complexity: residues 16 to 31 (PQSC…QSSC) and 42 to 55 (SSIS…SKNN). Positions 62–80 (SNGSVYSDETTLKTAQTHY) are enriched in polar residues. The segment covering 81–110 (TQQGQQAKPQQHTQQQQQQPQTPMQLQVPT) has biased composition (low complexity). A compositionally biased stretch (polar residues) spans 181–191 (HQPTASLSSIG). In terms of domain architecture, Ras-GEF spans 471-738 (DTEKVANQIH…MEMSLKMEPP (268 aa)). Residues 787–811 (PSTKNNNSSQASNRISQLSVNSTPH) show a composition bias toward polar residues. Disordered regions lie at residues 787 to 819 (PSTK…SSSA), 1645 to 1676 (RSVL…ARTS), and 1702 to 1738 (SVSS…GMGK). Low complexity-rich tracts occupy residues 1656–1676 (SVSS…ARTS) and 1702–1726 (SVSS…ASPN). A PH domain is found at 1751-1853 (SGFTSSSSQY…WMKAITLSKR (103 aa)). Residues 1872–2070 (VPVEDVCERE…HLIRNPEHYF (199 aa)) enclose the Rho-GAP domain.

In terms of biological role, GTPase-activating protein (GAP) for RHO proteins. Required for polarized growth and maintenance of cell polarity. In Eremothecium gossypii (strain ATCC 10895 / CBS 109.51 / FGSC 9923 / NRRL Y-1056) (Yeast), this protein is GTPase-activating protein BEM2 (BEM2).